A 262-amino-acid polypeptide reads, in one-letter code: Aminoglycoside 3'-phosphotransferase (262 aa).

Aspartate 187 (proton acceptor) is an active-site residue.

Belongs to the aminoglycoside phosphotransferase family. As to quaternary structure, monomer.

It localises to the cytoplasm. It carries out the reaction kanamycin A + ATP = kanamycin 3'-phosphate + ADP + H(+). Its function is as follows. Resistance to butirosin and structurally-related aminoglycosides, including kanamycin and amikacin. The polypeptide is Aminoglycoside 3'-phosphotransferase (Niallia circulans (Bacillus circulans)).